The primary structure comprises 448 residues: Probable D-serine dehydratase (448 aa).

N6-(pyridoxal phosphate)lysine is present on lysine 119.

This sequence belongs to the serine/threonine dehydratase family. DsdA subfamily. Pyridoxal 5'-phosphate is required as a cofactor.

The catalysed reaction is D-serine = pyruvate + NH4(+). In Pseudomonas aeruginosa (strain UCBPP-PA14), this protein is Probable D-serine dehydratase.